A 358-amino-acid chain; its full sequence is Methylthioribose-1-phosphate isomerase (358 aa).

M1 bears the N-acetylmethionine mark. Residue D248 is the Proton donor of the active site.

It belongs to the eIF-2B alpha/beta/delta subunits family. MtnA subfamily.

It localises to the cytoplasm. The protein localises to the nucleus. It catalyses the reaction 5-(methylsulfanyl)-alpha-D-ribose 1-phosphate = 5-(methylsulfanyl)-D-ribulose 1-phosphate. Its pathway is amino-acid biosynthesis; L-methionine biosynthesis via salvage pathway; L-methionine from S-methyl-5-thio-alpha-D-ribose 1-phosphate: step 1/6. Catalyzes the interconversion of methylthioribose-1-phosphate (MTR-1-P) into methylthioribulose-1-phosphate (MTRu-1-P). This chain is Methylthioribose-1-phosphate isomerase, found in Bos taurus (Bovine).